The sequence spans 160 residues: UPF0262 protein Mmar10_1128 (160 aa).

The protein belongs to the UPF0262 family.

This chain is UPF0262 protein Mmar10_1128, found in Maricaulis maris (strain MCS10) (Caulobacter maris).